Here is a 154-residue protein sequence, read N- to C-terminus: tRNA-splicing endonuclease (154 aa).

Active-site residues include Y86, H102, and K133.

It belongs to the tRNA-intron endonuclease family. Archaeal short subfamily. Homotetramer; although the tetramer contains four active sites, only two participate in the cleavage. Therefore, it should be considered as a dimer of dimers.

The catalysed reaction is pretRNA = a 3'-half-tRNA molecule with a 5'-OH end + a 5'-half-tRNA molecule with a 2',3'-cyclic phosphate end + an intron with a 2',3'-cyclic phosphate and a 5'-hydroxyl terminus.. In terms of biological role, endonuclease that removes tRNA introns. Cleaves pre-tRNA at the 5'- and 3'-splice sites to release the intron. The products are an intron and two tRNA half-molecules bearing 2',3' cyclic phosphate and 5'-OH termini. Recognizes a pseudosymmetric substrate in which 2 bulged loops of 3 bases are separated by a stem of 4 bp. In Nanoarchaeum equitans (strain Kin4-M), this protein is tRNA-splicing endonuclease.